Consider the following 466-residue polypeptide: Cysteine--tRNA ligase (466 aa).

A Zn(2+)-binding site is contributed by Cys27. A 'HIGH' region motif is present at residues 29–39 (PTVYNYIHIGN). Residues Cys207, His232, and Glu236 each contribute to the Zn(2+) site. The 'KMSKS' region motif lies at 264-268 (KMSKS). Lys267 provides a ligand contact to ATP.

Belongs to the class-I aminoacyl-tRNA synthetase family. Monomer. Zn(2+) serves as cofactor.

The protein localises to the cytoplasm. The catalysed reaction is tRNA(Cys) + L-cysteine + ATP = L-cysteinyl-tRNA(Cys) + AMP + diphosphate. This is Cysteine--tRNA ligase from Thermoanaerobacter pseudethanolicus (strain ATCC 33223 / 39E) (Clostridium thermohydrosulfuricum).